We begin with the raw amino-acid sequence, 579 residues long: Mitogen-activated protein kinase kinase kinase 7 (579 aa).

Positions 1-300 are interaction with MAPK8IP1; that stretch reads MSTASAASSS…FPGADEPLQY (300 aa). The Protein kinase domain maps to 36 to 291; that stretch reads IEVEEVVGRG…KIMTHLMRYF (256 aa). ATP is bound by residues 42–50 and lysine 63; that span reads VGRGAFGVV. Lysine 72 is covalently cross-linked (Glycyl lysine isopeptide (Lys-Gly) (interchain with G-Cter in ubiquitin)). Catalysis depends on aspartate 156, which acts as the Proton acceptor. Lysine 158 participates in a covalent cross-link: Glycyl lysine isopeptide (Lys-Gly) (interchain with G-Cter in ubiquitin). Phosphothreonine; by autocatalysis is present on residues threonine 184 and threonine 187. At serine 192 the chain carries Phosphoserine; by autocatalysis. A Glycyl lysine isopeptide (Lys-Gly) (interchain with G-Cter in ubiquitin) cross-link involves residue lysine 209. 2 disordered regions span residues 301-338 and 354-391; these read PCQYSDEGQSNSATSTGSFMDIASTNTSNKSDTNMEQV and KNQAKQQSESGRLSLGASRGSSVESLPPTSEGKRMSAD. The span at 306 to 338 shows a compositional bias: polar residues; the sequence is DEGQSNSATSTGSFMDIASTNTSNKSDTNMEQV. The span at 361-375 shows a compositional bias: low complexity; the sequence is SESGRLSLGASRGSS. Serine 367, serine 389, and serine 412 each carry phosphoserine. The segment covering 416-425 has biased composition (polar residues); sequence LTVTGTEPGQ. The tract at residues 416–466 is disordered; it reads LTVTGTEPGQVSSRSSSPSVRMITTSGPTSEKPARSHPWTPDDSTDTNGSD. Over residues 426 to 436 the composition is skewed to low complexity; sequence VSSRSSSPSVR. Serine 428 is subject to Phosphoserine.

Belongs to the protein kinase superfamily. STE Ser/Thr protein kinase family. MAP kinase kinase kinase subfamily. In terms of assembly, can form homodimer. Binds both upstream activators and downstream substrates in multimolecular complexes. Interacts with TAB1/MAP3K7IP1, TAB2/MAP3K7IP2 and TAB3/MAP3K7IP3. Identified in the TRIKA2 complex composed of MAP3K7/TAK1, TAB1/MAP3K7IP1 and TAB2/MAP3K7IP2. Interacts with PPM1L and PPM1B/PP2CB. Interaction with PP2A and PPP6C leads to its repressed activity. Interacts with TRAF6 and TAB1/MAP3K7IP1; during IL-1 signaling. Interacts with TAOK1 and TAOK2; interaction with TAOK2 interferes with MAP3K7 interaction with IKKA, thus preventing NF-kappa-B activation. Interacts with DYNC2I2 (via WD domains). Interacts with CYLD and RBCK1. Interacts with TGFBR1; induces MAP3K7/TAK1 activation by TRAF6. Interacts with MAPK8IP1 and SMAD6. Interacts with isoform 1 of VRK2. Interacts with DAB2; the interaction is induced by TGF-beta stimulation and may mediate TGF-beta stimulated JNK activation. Interacts with TRIM5. Part of a complex containing ITCH, NDFIP1 and MAP3K7. Interacts with PLEKHM1 (via N- and C-terminus). Interacts with TRIM8. Found in a complex with SH3RF1, RAC2, MAP2K7/MKK7, MAPK8IP1/JIP1, MAPK8/JNK1 and MAPK9/JNK2. Interacts with SASH1. Interacts with RIPK1. Mg(2+) serves as cofactor. Post-translationally, association with TAB1/MAP3K7IP1 promotes autophosphorylation and subsequent activation. Association with TAB2/MAP3K7IP2, itself associated with free unanchored Lys-63 polyubiquitin chain, promotes autophosphorylation and subsequent activation of MAP3K7. Dephosphorylation at Thr-187 by PP2A and PPP6C leads to inactivation. In terms of processing, 'Lys-48'-linked polyubiquitination at Lys-72 is induced by TNFalpha, and leads to proteasomal degradation. Undergoes 'Lys-48'-linked polyubiquitination catalyzed by ITCH. 'Lys-63'-linked polyubiquitination at Lys-158 by TRIM8 does not lead to proteasomal degradation but contributes to autophosphorylation and activation. Deubiquitinated by CYLD, a protease that selectively cleaves 'Lys-63'-linked ubiquitin chains.Deubiquitinated by USP19; leading to negative regulation of TNF-alpha- and IL-1beta-triggered NF-kappa-B activation.

It localises to the cytoplasm. The protein localises to the cell membrane. It catalyses the reaction L-seryl-[protein] + ATP = O-phospho-L-seryl-[protein] + ADP + H(+). It carries out the reaction L-threonyl-[protein] + ATP = O-phospho-L-threonyl-[protein] + ADP + H(+). With respect to regulation, activated by pro-inflammatory cytokines and in response to physical and chemical stresses, including osmotic stress, oxidative stress, arsenic and ultraviolet light irradiation. Activated by 'Lys-63'-linked polyubiquitination and by autophosphorylation. Association with TAB1/MAP3K7IP1 and TAB2/MAP3K7IP2 promotes activation through autophosphorylation, whereas PPM1B/PP2CB, PP2A and PPP6C dephosphorylation leads to inactivation. Ceramides are also able to activate MAP3K7/TAK1. In terms of biological role, serine/threonine kinase which acts as an essential component of the MAP kinase signal transduction pathway. Plays an important role in the cascades of cellular responses evoked by changes in the environment. Mediates signal transduction of TRAF6, various cytokines including interleukin-1 (IL-1), transforming growth factor-beta (TGFB), TGFB-related factors like BMP2 and BMP4, toll-like receptors (TLR), tumor necrosis factor receptor CD40 and B-cell receptor (BCR). Once activated, acts as an upstream activator of the MKK/JNK signal transduction cascade and the p38 MAPK signal transduction cascade through the phosphorylation and activation of several MAP kinase kinases like MAP2K1/MEK1, MAP2K3/MKK3, MAP2K6/MKK6 and MAP2K7/MKK7. These MAP2Ks in turn activate p38 MAPKs and c-jun N-terminal kinases (JNKs); both p38 MAPK and JNK pathways control the transcription factors activator protein-1 (AP-1). Independently of MAP2Ks and p38 MAPKs, acts as a key activator of NF-kappa-B by promoting activation of the I-kappa-B-kinase (IKK) core complex. Mechanistically, recruited to polyubiquitin chains of RIPK2 and IKBKG/NEMO via TAB2/MAP3K7IP2 and TAB3/MAP3K7IP3, and catalyzes phosphorylation and activation of IKBKB/IKKB component of the IKK complex, leading to NF-kappa-B activation. In osmotic stress signaling, plays a major role in the activation of MAPK8/JNK1, but not that of NF-kappa-B. Promotes TRIM5 capsid-specific restriction activity. Phosphorylates RIPK1 at 'Ser-321' which positively regulates RIPK1 interaction with RIPK3 to promote necroptosis but negatively regulates RIPK1 kinase activity and its interaction with FADD to mediate apoptosis. Phosphorylates STING1 in response to cGAMP-activation, promoting association between STEEP1 and STING1 and STING1 translocation to COPII vesicles. This Mus musculus (Mouse) protein is Mitogen-activated protein kinase kinase kinase 7 (Map3k7).